A 382-amino-acid polypeptide reads, in one-letter code: MNNFVKQVASKSLKPTKKLSPSDEVISLNECIISFNLDNFYYCNDGLFTKPINTPEDVLKSLLIMESFAYEKMIIKGLIKILISRAYINDIYFTPFGWLTGIDDDPETHVVIKIIFNSSLISIKSQVIEYLKPYNVNNLSVLTTEKELSINTFNVPDSIPMSIISFFPFDTDFILVILFFGVYNDSYCGISYISPKERLPYIIEILKPLMSEINMLSDEIGRTSSIRIFNSTSVKKFPTNTLTSICEIVYSFDESSFPTPKTFTPLNASPYIPKKIVSLLDLPSNVEIKAISRGGVDFITHINNKRLNTILVIAKDNFLKNSTFSGTFIKENIIWKGIYTYRIIKSSFPVPTIKSVTNKKKICKKHCFVNSQYTTRTLSHIL.

The protein belongs to the orthopoxvirus OPG082 family.

Its subcellular location is the virion. Binds to the hairpin form of the viral telomeric sequence. Might direct genome encapsidation into the virus particle. The chain is Telomere-binding protein OPG082 (OPG082) from Variola virus (isolate Human/India/Ind3/1967) (VARV).